A 288-amino-acid polypeptide reads, in one-letter code: Ribosomal RNA small subunit methyltransferase A (288 aa).

The span at 1-14 shows a compositional bias: polar residues; it reads MSKNQGGNKHQGGS. A disordered region spans residues 1–21; the sequence is MSKNQGGNKHQGGSKTHLGHR. Residues Asn-29, Leu-31, Gly-56, Glu-77, Asp-102, and Asn-122 each coordinate S-adenosyl-L-methionine.

It belongs to the class I-like SAM-binding methyltransferase superfamily. rRNA adenine N(6)-methyltransferase family. RsmA subfamily.

It is found in the cytoplasm. The catalysed reaction is adenosine(1518)/adenosine(1519) in 16S rRNA + 4 S-adenosyl-L-methionine = N(6)-dimethyladenosine(1518)/N(6)-dimethyladenosine(1519) in 16S rRNA + 4 S-adenosyl-L-homocysteine + 4 H(+). Functionally, specifically dimethylates two adjacent adenosines (A1518 and A1519) in the loop of a conserved hairpin near the 3'-end of 16S rRNA in the 30S particle. May play a critical role in biogenesis of 30S subunits. This chain is Ribosomal RNA small subunit methyltransferase A, found in Idiomarina loihiensis (strain ATCC BAA-735 / DSM 15497 / L2-TR).